Consider the following 175-residue polypeptide: Alpha-crystallin B chain (175 aa).

N-acetylmethionine is present on methionine 1. Phosphoserine is present on serine 19. An O-linked (GlcNAc) serine glycan is attached at serine 41. Serine 45 and serine 59 each carry phosphoserine. Residues arginine 56 to glutamate 164 enclose the sHSP domain. Histidine 83 is a binding site for Zn(2+). The residue at position 92 (lysine 92) is an N6-acetyllysine. Zn(2+) is bound by residues histidine 104, glutamate 106, histidine 111, and histidine 119. The disordered stretch occupies residues valine 142–lysine 175. Position 166 is an N6-acetyllysine (lysine 166). O-linked (GlcNAc) threonine glycosylation occurs at threonine 170.

Belongs to the small heat shock protein (HSP20) family. Heteromer composed of three CRYAA and one CRYAB subunits. Aggregates with homologous proteins, including the small heat shock protein HSPB1, to form large heteromeric complexes. Inter-subunit bridging via zinc ions enhances stability, which is crucial as there is no protein turn over in the lens. Interacts with HSPBAP1 and TTN/titin. Interacts with TMEM109; in the cellular response to DNA damage. Interacts with DES; binds rapidly during early stages of DES filament assembly and a reduced binding seen in the later stages. Interacts with TMED10; the interaction mediates the translocation from the cytoplasm into the ERGIC (endoplasmic reticulum-Golgi intermediate compartment) and thereby secretion. Interacts with ATP6V1A and with MTOR, forming a ternary complex.

It localises to the cytoplasm. Its subcellular location is the nucleus. The protein localises to the secreted. The protein resides in the lysosome. In terms of biological role, may contribute to the transparency and refractive index of the lens. Has chaperone-like activity, preventing aggregation of various proteins under a wide range of stress conditions. In lens epithelial cells, stabilizes the ATP6V1A protein, preventing its degradation by the proteasome. The polypeptide is Alpha-crystallin B chain (CRYAB) (Sus scrofa (Pig)).